Reading from the N-terminus, the 331-residue chain is Ketol-acid reductoisomerase (NADP(+)) (331 aa).

The KARI N-terminal Rossmann domain maps to 2-182 (ARLYYDADAN…GGTRAGILET (181 aa)). NADP(+) is bound by residues 25–28 (YGSQ), Ser-51, Ser-53, and 83–86 (DEVQ). His-108 is a catalytic residue. Gly-134 contacts NADP(+). A KARI C-terminal knotted domain is found at 183 to 328 (TFREETETDL…KDLRAMFSWT (146 aa)). The Mg(2+) site is built by Asp-191, Glu-195, Glu-227, and Glu-231. Ser-252 is a substrate binding site.

This sequence belongs to the ketol-acid reductoisomerase family. Requires Mg(2+) as cofactor.

The enzyme catalyses (2R)-2,3-dihydroxy-3-methylbutanoate + NADP(+) = (2S)-2-acetolactate + NADPH + H(+). The catalysed reaction is (2R,3R)-2,3-dihydroxy-3-methylpentanoate + NADP(+) = (S)-2-ethyl-2-hydroxy-3-oxobutanoate + NADPH + H(+). It participates in amino-acid biosynthesis; L-isoleucine biosynthesis; L-isoleucine from 2-oxobutanoate: step 2/4. Its pathway is amino-acid biosynthesis; L-valine biosynthesis; L-valine from pyruvate: step 2/4. Functionally, involved in the biosynthesis of branched-chain amino acids (BCAA). Catalyzes an alkyl-migration followed by a ketol-acid reduction of (S)-2-acetolactate (S2AL) to yield (R)-2,3-dihydroxy-isovalerate. In the isomerase reaction, S2AL is rearranged via a Mg-dependent methyl migration to produce 3-hydroxy-3-methyl-2-ketobutyrate (HMKB). In the reductase reaction, this 2-ketoacid undergoes a metal-dependent reduction by NADPH to yield (R)-2,3-dihydroxy-isovalerate. The protein is Ketol-acid reductoisomerase (NADP(+)) of Acaryochloris marina (strain MBIC 11017).